Here is a 188-residue protein sequence, read N- to C-terminus: Transcription antitermination protein NusB (188 aa).

The segment at 154–188 is disordered; that stretch reads RAANPGAVSGSDAPVAPWDDSEELPAEDEAEDSRP. Positions 172 to 188 are enriched in acidic residues; the sequence is DDSEELPAEDEAEDSRP.

Belongs to the NusB family.

Its function is as follows. Involved in transcription antitermination. Required for transcription of ribosomal RNA (rRNA) genes. Binds specifically to the boxA antiterminator sequence of the ribosomal RNA (rrn) operons. This chain is Transcription antitermination protein NusB, found in Corynebacterium efficiens (strain DSM 44549 / YS-314 / AJ 12310 / JCM 11189 / NBRC 100395).